Reading from the N-terminus, the 130-residue chain is MFVMVLRIILLALFAYCIYAVVKYVANPKRRLKLAQSKEHFYIIDEQNNTRKNFQLTYKGVLFEGEKHIPSKDHPLFIHTIFVWTESPEKLKHFSAKDFENIEEKVLERYPNCKIDWDQPIKLAKKAEER.

The chain crosses the membrane as a helical span at residues 2–22; the sequence is FVMVLRIILLALFAYCIYAVV.

It is found in the membrane. Its function is as follows. May mediate a negative feedback loop that down-regulates the expression of the sigma-W regulon following the activation of sigma-W in response to conditions of cell envelope stress. Might interact with and inhibit the activity of the protease PrsW, or could bind to the anti-sigma-W factor RsiW and thereby protect it from PrsW-mediated cleavage. This chain is Sigma-w pathway protein YsdB (ysdB), found in Bacillus subtilis (strain 168).